We begin with the raw amino-acid sequence, 478 residues long: Solute carrier family 49 member 4 (478 aa).

Residues 1–27 (MGSGWSSEEEERQPLLGPGLGPAPGAT) form a disordered region. At 1–51 (MGSGWSSEEEERQPLLGPGLGPAPGATRRGREAAAVLPAAGPSPGRVYGRR) the chain is on the cytoplasmic side. The Di-leucine motif; mediates lysosomal localization signature appears at 15-16 (LL). A helical transmembrane segment spans residues 52–72 (WLVLLLFSLLAFAQGLVWNTW). Over 73 to 89 (GPIQNSARQAYSFTGWD) the chain is Lumenal. Residues 90–110 (IALLVLWGPIGFLPCFAFMWL) traverse the membrane as a helical segment. Over 111-117 (LDKRGLR) the chain is Cytoplasmic. Residues 118-138 (ITVLLTSFLMVLGTGLRCIPV) traverse the membrane as a helical segment. Residues 139–152 (SDLTLKKRLIHGGQ) are Lumenal-facing. A helical membrane pass occupies residues 153 to 173 (ILNGLAGPTVMNAAPFLSTTW). The Cytoplasmic portion of the chain corresponds to 174–184 (FSADERATATA). A helical transmembrane segment spans residues 185–205 (IASMLSYLGGACAFLVGPLVV). Residues 206–229 (PAPNGTAPLLTAESSRDHIKDRIE) are Lumenal-facing. An N-linked (GlcNAc...) asparagine glycan is attached at Asn-209. Residues 230–250 (TVLYAEFGVVCLIFSATLAYF) form a helical membrane-spanning segment. At 251 to 281 (PPRPPLPPSVAAASQRLSYRRSFCRLLSNLR) the chain is on the cytoplasmic side. The helical transmembrane segment at 282–302 (FLMIALAYAIPLGVFAGWSGV) threads the bilayer. Topologically, residues 303–314 (LDLILTPVHVSQ) are lumenal. The chain crosses the membrane as a helical span at residues 315 to 335 (VDAGWIGFWSIVGGCVVGIAM). At 336–347 (ARFADFIRGMLK) the chain is on the cytoplasmic side. Residues 348-368 (LILLLLFSGATLSSTWFTLTC) traverse the membrane as a helical segment. Residues 369-384 (LNSVTHLPLTTVTLYA) lie on the Lumenal side of the membrane. A helical membrane pass occupies residues 385 to 405 (SCILLGVFLNSSVPIFFELFV). Residues 406–414 (ETVYPVPEG) lie on the Cytoplasmic side of the membrane. Residues 415–435 (ITCGVVTFLSNMFMGVLLFFV) form a helical membrane-spanning segment. Over 436–442 (TFYHTEL) the chain is Lumenal. The chain crosses the membrane as a helical span at residues 443–463 (SWFNWCLPGSCLLSLLLILCF). Residues 464-478 (RESYDRLYLDVVVSV) are Cytoplasmic-facing.

It belongs to the major facilitator superfamily. Post-translationally, cleaved in lysosomes by cathepsin L between Leu-214 and Ala-261, generating a N-glycosylated N-terminal and a non-glycosylated C-terminal fragment.

It localises to the lysosome membrane. The catalysed reaction is pyridoxine(out) + n H(+)(out) = pyridoxine(in) + n H(+)(in). Mediates H(+)-dependent pyridoxine transport. In Rattus norvegicus (Rat), this protein is Solute carrier family 49 member 4 (Slc49a4).